A 162-amino-acid chain; its full sequence is Putative 4-hydroxy-4-methyl-2-oxoglutarate aldolase (162 aa).

Substrate-binding positions include 75–78 (GDML) and Arg97. Residue Asp98 coordinates a divalent metal cation.

Belongs to the class II aldolase/RraA-like family. Homotrimer. A divalent metal cation serves as cofactor.

The enzyme catalyses 4-hydroxy-4-methyl-2-oxoglutarate = 2 pyruvate. The catalysed reaction is oxaloacetate + H(+) = pyruvate + CO2. Its function is as follows. Catalyzes the aldol cleavage of 4-hydroxy-4-methyl-2-oxoglutarate (HMG) into 2 molecules of pyruvate. Also contains a secondary oxaloacetate (OAA) decarboxylase activity due to the common pyruvate enolate transition state formed following C-C bond cleavage in the retro-aldol and decarboxylation reactions. This chain is Putative 4-hydroxy-4-methyl-2-oxoglutarate aldolase, found in Pseudomonas paraeruginosa (strain DSM 24068 / PA7) (Pseudomonas aeruginosa (strain PA7)).